The following is a 132-amino-acid chain: Urease subunit beta (132 aa).

It belongs to the urease beta subunit family. As to quaternary structure, heterotrimer of UreA (gamma), UreB (beta) and UreC (alpha) subunits. Three heterotrimers associate to form the active enzyme.

The protein localises to the cytoplasm. It carries out the reaction urea + 2 H2O + H(+) = hydrogencarbonate + 2 NH4(+). It participates in nitrogen metabolism; urea degradation; CO(2) and NH(3) from urea (urease route): step 1/1. In Natronomonas pharaonis (strain ATCC 35678 / DSM 2160 / CIP 103997 / JCM 8858 / NBRC 14720 / NCIMB 2260 / Gabara) (Halobacterium pharaonis), this protein is Urease subunit beta.